Reading from the N-terminus, the 77-residue chain is Acyl carrier protein (77 aa).

The 76-residue stretch at 1–76 folds into the Carrier domain; that stretch reads MAIFDDVKKV…DVVNYIENLQ (76 aa). An O-(pantetheine 4'-phosphoryl)serine modification is found at S36.

It belongs to the acyl carrier protein (ACP) family. Post-translationally, 4'-phosphopantetheine is transferred from CoA to a specific serine of apo-ACP by AcpS. This modification is essential for activity because fatty acids are bound in thioester linkage to the sulfhydryl of the prosthetic group.

It localises to the cytoplasm. It participates in lipid metabolism; fatty acid biosynthesis. In terms of biological role, carrier of the growing fatty acid chain in fatty acid biosynthesis. The sequence is that of Acyl carrier protein from Campylobacter lari (strain RM2100 / D67 / ATCC BAA-1060).